A 1648-amino-acid chain; its full sequence is MGIPDGSLLDLIDKVRSWITSDSSDSLFLLSSSKQDFGIMPIVSKMCHDCGTKVEQGYCCLSCGSCWCKSCSDTEESKMKLCRECDAEVRELRVKSYDKVHPRDSPDPPSSLATESESLASSLEIRDCRNMASIRCYPSRGEEEEARYCGKQLLSPSSDNYQDSSDIESGSVSARHELFSCKSSAGSSPHDSPLRNNFSPLGRFVQHAKDLRSPTVCSFDNHQEQLLADNLVKPGQGVLEQEDHEEEEDKLQQPLDFENNGRIWYPPPPEDENDDAESNYFHYDDEDDDIGDSATEFSLSSSFSSHIPTKEKLGENSNEPLRTVVHDHFRALVAELLRGEELSPSDDGSAGEWLDIVTALAWQAANFVKPDTRAGGSMDPGNYVKIKCVASGNQNESILIRGIVCSKNITHKRMISQYKNPRVMLLAGSLEYQRVAGQLASFNTLLQQENEHMKAIIAKIESLRPNVLLVEKSASSYAQQYLLEKEISLVLNVKRSLLDRIARCTGAVLCPSLDSISTARLGHCELFRTERVLEQHEAGNQSNRKPSRTLMYFEGCPRRLGCTVVLRGSCREELKKVKHVIQYAVFAAYHLSLETSFLADEGASLPKIRLKQPGMVRTASQRRIIDEGISLITQSPTETDSQALLETAAHEDEHTAPMPEHEVCESLCEDFDPTQIFPPSSEVETEQSDTLNGDFANNLVTRSYSSNQLNDLHEPTLCLSSEIPETPTQQPSGEEDNGRGEEENQLVNPQDLPQHESFYEDDVSSEYFSAADSHQSILVSFSSRCVLKESVCERSRLLRIKFYGSFDKPLGRYLKDDLFDKTSSCRSCKELVDAHVLCYSHQNGNLTINVRRLPSMKLPGEQDGKIWMWHRCLRCAHVDGVPPATRRVVMSDAAWGLSFGKFLELSFSNHATANRVASCGHSLQRDCLRFYGFGNMVAFFRYSPINILTVLLPPSMLEFNSHPQQEWIRTEAAELVGKMRTMYTEISDMLNRMEEKSSLLEPEQSEACDLHSRIIGLIDQLVKEKDEYDDALQPIFEENLQIQGSLDILELNRLRRALMIGAHAWDHQLYLLNSQLKKASVFKTGDDNAPRNPEMHDPPKIDRRMQEGSDERDEQSHTDSEANGDNKDPENIPSPGTSLSERIDSAWLGSFQNLEKAETIAETEGFSAVNSSLRRLARPIRVQSFDSAIRFQERIQKGLPPSSLYLSTLRSFHASGEYRNMVRDPVSNVMRTYSQMLPLEVQKLDLIVGSAPTYISSASQMADGARMLIPQRGLNDIVVPVYDDDPASVVSYAINSKEYKEWIVNKGLASSSSSSNLNNRESEPSAFSTWRSLSMDVDYIQHAVYGSSQDDRKSPHLTISFSDRASSSSTATEGKVKFSVTCYFATQFDTLRKTCCPSEVDFVRSLSRCQRWSAQGGKSNVYFAKSLDERFIIKQVVKTELDSFEDFAPEYFKYLKESLSSGSPTCLAKILGIYQVSIKHPKGGKETKMDLMVMENLFYNRRISRIYDLKGSARSRYNPNTSGADKVLLDMNLLETLRTEPIFLGSKAKRSLERAIWNDTNFLASVDVMDYSLLVGFDEERKELVLGIIDFMRQYTWDKHLETWVKASGILGGPKNASPTIVSPKQYKRRFRKAMTTYFLTVPEPWTS.

The segment covering 97–106 has biased composition (basic and acidic residues); the sequence is YDKVHPRDSP. 4 disordered regions span residues 97–116, 241–276, 721–746, and 1083–1139; these read YDKV…ATES, QEDH…NDDA, SEIP…ENQL, and KTGD…GTSL. The segment covering 1084–1130 has biased composition (basic and acidic residues); the sequence is TGDDNAPRNPEMHDPPKIDRRMQEGSDERDEQSHTDSEANGDNKDPE. The PIPK domain maps to 1316 to 1639; it reads NLNNRESEPS…RFRKAMTTYF (324 aa).

As to quaternary structure, component of the PI(3,5)P2 regulatory complex at least composed of ATG18, SAC/FIG4, FAB1 and VAC14. Requires Mg(2+) as cofactor. The cofactor is Mn(2+).

The catalysed reaction is a 1,2-diacyl-sn-glycero-3-phospho-(1D-myo-inositol-3-phosphate) + ATP = a 1,2-diacyl-sn-glycero-3-phospho-(1D-myo-inositol-3,5-bisphosphate) + ADP + H(+). The PI(3,5)P2 regulatory complex regulates both the synthesis and turnover of phosphatidylinositol 3,5-bisphosphate (PtdIns(3,5)P2). Catalyzes the phosphorylation of phosphatidylinositol 3-phosphate on the fifth hydroxyl of the myo-inositol ring, to form phosphatidylinositol 3,5-bisphosphate. The sequence is that of Putative 1-phosphatidylinositol-3-phosphate 5-kinase FAB1C (FAB1C) from Arabidopsis thaliana (Mouse-ear cress).